The primary structure comprises 388 residues: Chorismate synthase (388 aa).

Positions 39 and 45 each coordinate NADP(+). FMN-binding positions include R130 to S132, N251 to A252, A296, K311 to T315, and R337.

This sequence belongs to the chorismate synthase family. As to quaternary structure, homotetramer. FMNH2 is required as a cofactor.

It carries out the reaction 5-O-(1-carboxyvinyl)-3-phosphoshikimate = chorismate + phosphate. The protein operates within metabolic intermediate biosynthesis; chorismate biosynthesis; chorismate from D-erythrose 4-phosphate and phosphoenolpyruvate: step 7/7. Its function is as follows. Catalyzes the anti-1,4-elimination of the C-3 phosphate and the C-6 proR hydrogen from 5-enolpyruvylshikimate-3-phosphate (EPSP) to yield chorismate, which is the branch point compound that serves as the starting substrate for the three terminal pathways of aromatic amino acid biosynthesis. This reaction introduces a second double bond into the aromatic ring system. The chain is Chorismate synthase from Streptococcus equi subsp. zooepidemicus (strain H70).